Consider the following 621-residue polypeptide: MSAPTIPGLEGNAPTTNQDMLNWIAECAELCQPDKVVFCDGSDEEWEAIAKDLVEKGTLIKLNEEKRPNSYLASSDPADVARVESRTFICSKTEDGAGPTNNWRDPDEMRAEMSEHFKGSMKGRTMYVVPFCMGPITDPDPKLGIELTDSGYVVMSMRIMTRMGKEALDKIGDGPFVKGLHSVGAPLEPGQEDVKWPCNETKYITQFPEDRVIWSYGSGYGGNAILAKKCYALRIASVMAKDEGWMAEHMLILKLISPEGKAYHICAAFPSQCGKTNLAMIQPTIPGWKAEVIGDDIAWLHFGDDGRLYAVNPENGFFGVAPGTNYKSNPNAMKTMEAGNNIFTNVALTDDGDVWWEGLENEPDHLIDWKGKDWTPDEDCLSSHPNSRYCVPIEQCPVAAPEFNDPKGVPVDAILFGGRRPDTVPLVTEAIDWQHATFIGATLASGQTAAAAEAKVGTLRYDPMAMLPFIGYNVGDYLQHWLDIGKKGGDKLPKVFLVNWFRRGDDGRFLWPGFGENSRVLKWIVDRIEGRVDAKKTVVGYTAYSKDIDIDGLDTDPKDVKAALTAPADKWQMDLSDTEDWLKSLGPKVPQEIWDEFDFLKTRIKTANKDGNKALDNMKTK.

Substrate is bound by residues arginine 82 and 220–222; that span reads YGG. Residues lysine 229 and histidine 249 each coordinate Mn(2+). Residue serine 271 coordinates substrate. 272–277 is a GTP binding site; it reads QCGKTN. Cysteine 273 is a catalytic residue. Residue aspartate 296 participates in Mn(2+) binding. Substrate is bound at residue 386 to 388; the sequence is NSR. GTP is bound by residues arginine 388, arginine 419, and 514 to 517; that span reads FGEN.

Belongs to the phosphoenolpyruvate carboxykinase [GTP] family. As to quaternary structure, monomer. It depends on Mn(2+) as a cofactor.

Its subcellular location is the cytoplasm. It carries out the reaction oxaloacetate + GTP = phosphoenolpyruvate + GDP + CO2. Its pathway is carbohydrate biosynthesis; gluconeogenesis. Functionally, catalyzes the conversion of oxaloacetate (OAA) to phosphoenolpyruvate (PEP), the rate-limiting step in the metabolic pathway that produces glucose from lactate and other precursors derived from the citric acid cycle. This chain is Phosphoenolpyruvate carboxykinase [GTP], found in Corynebacterium kroppenstedtii (strain DSM 44385 / JCM 11950 / CIP 105744 / CCUG 35717).